Consider the following 194-residue polypeptide: 7-methyl-GTP pyrophosphatase (194 aa).

Residue Asp70 is the Proton acceptor of the active site.

This sequence belongs to the Maf family. YceF subfamily. Requires a divalent metal cation as cofactor.

It localises to the cytoplasm. It catalyses the reaction N(7)-methyl-GTP + H2O = N(7)-methyl-GMP + diphosphate + H(+). Its function is as follows. Nucleoside triphosphate pyrophosphatase that hydrolyzes 7-methyl-GTP (m(7)GTP). May have a dual role in cell division arrest and in preventing the incorporation of modified nucleotides into cellular nucleic acids. This Ralstonia nicotianae (strain ATCC BAA-1114 / GMI1000) (Ralstonia solanacearum) protein is 7-methyl-GTP pyrophosphatase.